A 286-amino-acid polypeptide reads, in one-letter code: Shikimate dehydrogenase (NADP(+)) (286 aa).

Residues 22 to 24 (SRS) and threonine 71 contribute to the shikimate site. The active-site Proton acceptor is lysine 75. Glutamate 87 is an NADP(+) binding site. Residues asparagine 96 and aspartate 111 each coordinate shikimate. Residues 136-140 (GAGGA), 160-165 (NRTAAR), and isoleucine 225 contribute to the NADP(+) site. Tyrosine 227 provides a ligand contact to shikimate. Glycine 248 is an NADP(+) binding site.

This sequence belongs to the shikimate dehydrogenase family. In terms of assembly, homodimer.

It catalyses the reaction shikimate + NADP(+) = 3-dehydroshikimate + NADPH + H(+). Its pathway is metabolic intermediate biosynthesis; chorismate biosynthesis; chorismate from D-erythrose 4-phosphate and phosphoenolpyruvate: step 4/7. In terms of biological role, involved in the biosynthesis of the chorismate, which leads to the biosynthesis of aromatic amino acids. Catalyzes the reversible NADPH linked reduction of 3-dehydroshikimate (DHSA) to yield shikimate (SA). The polypeptide is Shikimate dehydrogenase (NADP(+)) (Sinorhizobium fredii (strain NBRC 101917 / NGR234)).